A 470-amino-acid polypeptide reads, in one-letter code: Fumarate hydratase class II (470 aa).

Substrate is bound by residues 99-101 (SGT), 129-132 (HPND), 139-141 (SSN), and Thr187. His188 (proton donor/acceptor) is an active-site residue. Ser318 is an active-site residue. Residues Ser319 and 324–326 (KIN) each bind substrate.

The protein belongs to the class-II fumarase/aspartase family. Fumarase subfamily. Homotetramer.

It localises to the cytoplasm. It catalyses the reaction (S)-malate = fumarate + H2O. The protein operates within carbohydrate metabolism; tricarboxylic acid cycle; (S)-malate from fumarate: step 1/1. In terms of biological role, involved in the TCA cycle. Catalyzes the stereospecific interconversion of fumarate to L-malate. The polypeptide is Fumarate hydratase class II (Halobacterium salinarum (strain ATCC 700922 / JCM 11081 / NRC-1) (Halobacterium halobium)).